The following is a 521-amino-acid chain: Bifunctional purine biosynthesis protein PurH (521 aa).

The MGS-like domain occupies 1 to 147; the sequence is MAKITRALIS…KNNADVTVLV (147 aa).

The protein belongs to the PurH family.

The catalysed reaction is (6R)-10-formyltetrahydrofolate + 5-amino-1-(5-phospho-beta-D-ribosyl)imidazole-4-carboxamide = 5-formamido-1-(5-phospho-D-ribosyl)imidazole-4-carboxamide + (6S)-5,6,7,8-tetrahydrofolate. It carries out the reaction IMP + H2O = 5-formamido-1-(5-phospho-D-ribosyl)imidazole-4-carboxamide. It functions in the pathway purine metabolism; IMP biosynthesis via de novo pathway; 5-formamido-1-(5-phospho-D-ribosyl)imidazole-4-carboxamide from 5-amino-1-(5-phospho-D-ribosyl)imidazole-4-carboxamide (10-formyl THF route): step 1/1. The protein operates within purine metabolism; IMP biosynthesis via de novo pathway; IMP from 5-formamido-1-(5-phospho-D-ribosyl)imidazole-4-carboxamide: step 1/1. In Geobacter sulfurreducens (strain ATCC 51573 / DSM 12127 / PCA), this protein is Bifunctional purine biosynthesis protein PurH.